Reading from the N-terminus, the 282-residue chain is Energy-coupling factor transporter ATP-binding protein EcfA1 (282 aa).

Residues 6–243 enclose the ABC transporter domain; it reads VTVKHLSFTY…EVLIKSAGLE (238 aa). 40 to 47 provides a ligand contact to ATP; the sequence is GHNGSGKS.

It belongs to the ABC transporter superfamily. Energy-coupling factor EcfA family. In terms of assembly, forms a stable energy-coupling factor (ECF) transporter complex composed of 2 membrane-embedded substrate-binding proteins (S component), 2 ATP-binding proteins (A component) and 2 transmembrane proteins (T component).

The protein localises to the cell membrane. Functionally, ATP-binding (A) component of a common energy-coupling factor (ECF) ABC-transporter complex. Unlike classic ABC transporters this ECF transporter provides the energy necessary to transport a number of different substrates. This Lactobacillus johnsonii (strain CNCM I-12250 / La1 / NCC 533) protein is Energy-coupling factor transporter ATP-binding protein EcfA1.